The following is a 210-amino-acid chain: Uracil phosphoribosyltransferase (210 aa).

5-phospho-alpha-D-ribose 1-diphosphate is bound by residues Arg78, Arg103, and 130–138; that span reads DPMLATGGS. Uracil-binding positions include Ile193 and 198–200; that span reads GDA. A 5-phospho-alpha-D-ribose 1-diphosphate-binding site is contributed by Asp199.

This sequence belongs to the UPRTase family. Mg(2+) serves as cofactor.

It carries out the reaction UMP + diphosphate = 5-phospho-alpha-D-ribose 1-diphosphate + uracil. It functions in the pathway pyrimidine metabolism; UMP biosynthesis via salvage pathway; UMP from uracil: step 1/1. Its activity is regulated as follows. Allosterically activated by GTP. Its function is as follows. Catalyzes the conversion of uracil and 5-phospho-alpha-D-ribose 1-diphosphate (PRPP) to UMP and diphosphate. This chain is Uracil phosphoribosyltransferase, found in Salinibacter ruber (strain DSM 13855 / M31).